We begin with the raw amino-acid sequence, 419 residues long: Glutamyl-tRNA reductase (419 aa).

Residues 50 to 53, S108, 113 to 115, and Q119 contribute to the substrate site; these read TCNR and ETQ. The Nucleophile role is filled by C51. 188–193 provides a ligand contact to NADP(+); that stretch reads GAGEMI.

The protein belongs to the glutamyl-tRNA reductase family. Homodimer.

It catalyses the reaction (S)-4-amino-5-oxopentanoate + tRNA(Glu) + NADP(+) = L-glutamyl-tRNA(Glu) + NADPH + H(+). The protein operates within porphyrin-containing compound metabolism; protoporphyrin-IX biosynthesis; 5-aminolevulinate from L-glutamyl-tRNA(Glu): step 1/2. Its function is as follows. Catalyzes the NADPH-dependent reduction of glutamyl-tRNA(Glu) to glutamate 1-semialdehyde (GSA). This Albidiferax ferrireducens (strain ATCC BAA-621 / DSM 15236 / T118) (Rhodoferax ferrireducens) protein is Glutamyl-tRNA reductase.